A 108-amino-acid chain; its full sequence is Large ribosomal subunit protein uL23 (108 aa).

Belongs to the universal ribosomal protein uL23 family. In terms of assembly, part of the 50S ribosomal subunit. Contacts protein L29, and trigger factor when it is bound to the ribosome.

One of the early assembly proteins it binds 23S rRNA. One of the proteins that surrounds the polypeptide exit tunnel on the outside of the ribosome. Forms the main docking site for trigger factor binding to the ribosome. The protein is Large ribosomal subunit protein uL23 of Polaromonas naphthalenivorans (strain CJ2).